Here is a 147-residue protein sequence, read N- to C-terminus: Ribonuclease H (147 aa).

Residues D8, E46, D68, and D132 each contribute to the Mg(2+) site.

Belongs to the RNase H family. Monomer. Mg(2+) is required as a cofactor.

It localises to the cytoplasm. It carries out the reaction Endonucleolytic cleavage to 5'-phosphomonoester.. In terms of biological role, endonuclease that specifically degrades the RNA of RNA-DNA hybrids. This Geotalea uraniireducens (strain Rf4) (Geobacter uraniireducens) protein is Ribonuclease H.